A 239-amino-acid chain; its full sequence is AA9 family lytic polysaccharide monooxygenase C (239 aa).

His-1 contacts Cu(2+). Cys-39 and Cys-190 are oxidised to a cystine. The N-linked (GlcNAc...) asparagine glycan is linked to Asn-75. His-84 provides a ligand contact to Cu(2+). A glycan (N-linked (GlcNAc...) asparagine) is linked at Asn-135. 2 residues coordinate O2: His-157 and Gln-166. Tyr-168 serves as a coordination point for Cu(2+). 2 N-linked (GlcNAc...) asparagine glycosylation sites follow: Asn-194 and Asn-229.

This sequence belongs to the polysaccharide monooxygenase AA9 family. It depends on Cu(2+) as a cofactor.

The protein localises to the secreted. The enzyme catalyses [(1-&gt;4)-beta-D-glucosyl]n+m + reduced acceptor + O2 = 4-dehydro-beta-D-glucosyl-[(1-&gt;4)-beta-D-glucosyl]n-1 + [(1-&gt;4)-beta-D-glucosyl]m + acceptor + H2O.. In terms of biological role, lytic polysaccharide monooxygenase (LPMO) that depolymerizes crystalline and amorphous polysaccharides via the oxidation of scissile alpha- or beta-(1-4)-glycosidic bonds, yielding C1 or C4 oxidation products. Catalysis by LPMOs requires the reduction of the active-site copper from Cu(II) to Cu(I) by a reducing agent and H(2)O(2) or O(2) as a cosubstrate. In Gloeophyllum trabeum (Brown rot fungus), this protein is AA9 family lytic polysaccharide monooxygenase C.